We begin with the raw amino-acid sequence, 354 residues long: Protein RecA (354 aa).

Residue 65–72 participates in ATP binding; that stretch reads GPESSGKT.

Belongs to the RecA family.

The protein localises to the cytoplasm. Its function is as follows. Can catalyze the hydrolysis of ATP in the presence of single-stranded DNA, the ATP-dependent uptake of single-stranded DNA by duplex DNA, and the ATP-dependent hybridization of homologous single-stranded DNAs. It interacts with LexA causing its activation and leading to its autocatalytic cleavage. This is Protein RecA from Vibrio cholerae serotype O1 (strain ATCC 39315 / El Tor Inaba N16961).